The sequence spans 220 residues: Large ribosomal subunit protein uL16 (220 aa).

It belongs to the universal ribosomal protein uL16 family. In terms of assembly, component of the large ribosomal subunit. Mature ribosomes consist of a small (40S) and a large (60S) subunit. The 40S subunit contains about 32 different proteins and 1 molecule of RNA (18S). The 60S subunit contains 45 different proteins and 3 molecules of RNA (25S, 5.8S and 5S).

The protein resides in the cytoplasm. Functionally, component of the ribosome, a large ribonucleoprotein complex responsible for the synthesis of proteins in the cell. The small ribosomal subunit (SSU) binds messenger RNAs (mRNAs) and translates the encoded message by selecting cognate aminoacyl-transfer RNA (tRNA) molecules. The large subunit (LSU) contains the ribosomal catalytic site termed the peptidyl transferase center (PTC), which catalyzes the formation of peptide bonds, thereby polymerizing the amino acids delivered by tRNAs into a polypeptide chain. The nascent polypeptides leave the ribosome through a tunnel in the LSU and interact with protein factors that function in enzymatic processing, targeting, and the membrane insertion of nascent chains at the exit of the ribosomal tunnel. This is Large ribosomal subunit protein uL16 from Candida albicans (strain SC5314 / ATCC MYA-2876) (Yeast).